The following is a 470-amino-acid chain: Neuraminidase (470 aa).

Over 1-6 (MNPNQK) the chain is Intravirion. A helical membrane pass occupies residues 7 to 27 (IITIGSISIAIGIISLMLQIG). Residues 11–33 (GSISIAIGIISLMLQIGNIISIW) are involved in apical transport and lipid raft association. Residues 28 to 470 (NIISIWASHS…GAELPFTIDK (443 aa)) are Virion surface-facing. The tract at residues 36–90 (HSIQTGSQNHTGICNQRIITYENSTWVNHTYVNINNTNVVAGKDKTSVTLAGNSS) is hypervariable stalk region. N-linked (GlcNAc...) asparagine; by host glycosylation is found at Asn44, Asn58, Asn63, Asn70, and Asn88. The segment at 91 to 470 (LCSISGWAIY…GAELPFTIDK (380 aa)) is head of neuraminidase. Cystine bridges form between Cys92-Cys417, Cys124-Cys129, Cys184-Cys231, Cys233-Cys238, Cys279-Cys292, Cys281-Cys290, Cys318-Cys335, and Cys421-Cys447. Residue Arg118 coordinates substrate. Asn146 is a glycosylation site (N-linked (GlcNAc...) asparagine; by host). Asp151 functions as the Proton donor/acceptor in the catalytic mechanism. Arg152 provides a ligand contact to substrate. The N-linked (GlcNAc...) asparagine; by host glycan is linked to Asn235. Residue 277-278 (EE) participates in substrate binding. Arg293 lines the substrate pocket. 3 residues coordinate Ca(2+): Asp294, Gly298, and Asp324. Arg368 is a substrate binding site. Residue Tyr402 is the Nucleophile of the active site. Asn434 and Asn455 each carry an N-linked (GlcNAc...) asparagine; by host glycan.

This sequence belongs to the glycosyl hydrolase 34 family. Homotetramer. Ca(2+) serves as cofactor. N-glycosylated.

The protein localises to the virion membrane. It is found in the host apical cell membrane. The enzyme catalyses Hydrolysis of alpha-(2-&gt;3)-, alpha-(2-&gt;6)-, alpha-(2-&gt;8)- glycosidic linkages of terminal sialic acid residues in oligosaccharides, glycoproteins, glycolipids, colominic acid and synthetic substrates.. Inhibited by the neuraminidase inhibitors zanamivir (Relenza) and oseltamivir (Tamiflu). These drugs interfere with the release of progeny virus from infected cells and are effective against all influenza strains. Resistance to neuraminidase inhibitors is quite rare. In terms of biological role, catalyzes the removal of terminal sialic acid residues from viral and cellular glycoconjugates. Cleaves off the terminal sialic acids on the glycosylated HA during virus budding to facilitate virus release. Additionally helps virus spread through the circulation by further removing sialic acids from the cell surface. These cleavages prevent self-aggregation and ensure the efficient spread of the progeny virus from cell to cell. Otherwise, infection would be limited to one round of replication. Described as a receptor-destroying enzyme because it cleaves a terminal sialic acid from the cellular receptors. May facilitate viral invasion of the upper airways by cleaving the sialic acid moieties on the mucin of the airway epithelial cells. Likely to plays a role in the budding process through its association with lipid rafts during intracellular transport. May additionally display a raft-association independent effect on budding. Plays a role in the determination of host range restriction on replication and virulence. Sialidase activity in late endosome/lysosome traffic seems to enhance virus replication. This Influenza A virus (strain A/Russia:St.Petersburg/8/2006 H1N1) protein is Neuraminidase.